The following is a 709-amino-acid chain: Coiled-coil domain-containing protein 13 (709 aa).

3 coiled-coil regions span residues 70–97 (IFEKRVLEDEIQHLRSELRETVDENGRL), 139–178 (ELSKKNRGLMAESESAKVRIKQLTNRIQELEHQLQMASAK), and 206–288 (EVKA…QRQN). Serine 258 carries the phosphoserine modification. Residues 281–312 (KQLGQRQNKPAGSSSSEVPLSSDSRKMTAQEK) form a disordered region. Positions 293–302 (SSSSEVPLSS) are enriched in low complexity. A coiled-coil region spans residues 323–457 (DKQESWEKLA…ELEIGQLSVQ (135 aa)). 3 disordered regions span residues 462 to 499 (KGGGEGASPADARFPEDQTPITNSPASAGDHVGRLGSS), 512 to 542 (SALTRPSLPSPHGTSPRFSDSPEQKGWQAQA), and 600 to 641 (KMRL…SSTQ). Serine 469 and serine 532 each carry phosphoserine. Residues 539-604 (QAQAAEMKAL…EQHLEKMRLE (66 aa)) adopt a coiled-coil conformation.

As to quaternary structure, interacts with PCM1, CEP290 and PCNT.

It localises to the cytoplasm. It is found in the cytoskeleton. Its subcellular location is the microtubule organizing center. The protein resides in the centrosome. The protein localises to the centriolar satellite. It localises to the cilium basal body. In terms of biological role, required for primary cilia formation and promotes the localization of the ciliopathy protein BBS4 to both centriolar satellites and cilia. This chain is Coiled-coil domain-containing protein 13, found in Mus musculus (Mouse).